A 203-amino-acid polypeptide reads, in one-letter code: Outer-membrane lipoprotein LolB (203 aa).

Positions 1 to 16 are cleaved as a signal peptide; the sequence is MKTFLPCLFFLLILVG. Cys17 is lipidated: N-palmitoyl cysteine. The S-diacylglycerol cysteine moiety is linked to residue Cys17.

The protein belongs to the LolB family. As to quaternary structure, monomer.

The protein resides in the cell outer membrane. Its function is as follows. Plays a critical role in the incorporation of lipoproteins in the outer membrane after they are released by the LolA protein. This Psychromonas ingrahamii (strain DSM 17664 / CCUG 51855 / 37) protein is Outer-membrane lipoprotein LolB.